A 448-amino-acid chain; its full sequence is Protease Do-like 8, chloroplastic (448 aa).

The tract at residues 152–333 is serine protease; the sequence is EGNGSGVVWD…IPSSTVLKIV (182 aa). Active-site charge relay system residues include His-171, Asp-214, and Ser-292. The PDZ domain occupies 336 to 433; sequence LIQFSKVLRA…DKVTLKIKRG (98 aa).

Belongs to the peptidase S1C family.

It localises to the plastid. The protein resides in the chloroplast thylakoid lumen. Probable serine protease. The sequence is that of Protease Do-like 8, chloroplastic (DEGP8) from Arabidopsis thaliana (Mouse-ear cress).